Reading from the N-terminus, the 550-residue chain is Mitochondrial distribution and morphology protein 12 (550 aa).

Residues 1–550 (MSIELNWETL…VYPSFWTFLV (550 aa)) form the SMP-LTD domain. 3 disordered regions span residues 62–168 (ITDP…PQDL), 218–356 (PPQW…TKYR), and 474–493 (TLASPAGAAPGSDEKAGGNT). Acidic residues predominate over residues 69–90 (FYEEDPDVDYDDEDEDVEETHD). Over residues 125–140 (VASSSSSSVGRGSAPR) the composition is skewed to low complexity. Polar residues-rich tracts occupy residues 148 to 157 (PTKSNININT), 251 to 269 (PSHSRTSSTVSNADLQTAS), 278 to 289 (TPTSFLRSGQQT), and 296 to 323 (VSTLAPTSVGTSRPPTRDLTTTMSTAQE).

This sequence belongs to the MDM12 family. Component of the ER-mitochondria encounter structure (ERMES) or MDM complex, composed of MMM1, MDM10, MDM12 and MDM34. An MMM1 homodimer associates with one molecule of MDM12 on each side in a pairwise head-to-tail manner, and the SMP-LTD domains of MMM1 and MDM12 generate a continuous hydrophobic tunnel for phospholipid trafficking.

The protein resides in the mitochondrion outer membrane. It localises to the endoplasmic reticulum membrane. In terms of biological role, component of the ERMES/MDM complex, which serves as a molecular tether to connect the endoplasmic reticulum (ER) and mitochondria. Components of this complex are involved in the control of mitochondrial shape and protein biogenesis, and function in nonvesicular lipid trafficking between the ER and mitochondria. MDM12 is required for the interaction of the ER-resident membrane protein MMM1 and the outer mitochondrial membrane-resident beta-barrel protein MDM10. The MDM12-MMM1 subcomplex functions in the major beta-barrel assembly pathway that is responsible for biogenesis of all mitochondrial outer membrane beta-barrel proteins, and acts in a late step after the SAM complex. The MDM10-MDM12-MMM1 subcomplex further acts in the TOM40-specific pathway after the action of the MDM12-MMM1 complex. Essential for establishing and maintaining the structure of mitochondria and maintenance of mtDNA nucleoids. This Pyricularia oryzae (strain 70-15 / ATCC MYA-4617 / FGSC 8958) (Rice blast fungus) protein is Mitochondrial distribution and morphology protein 12.